A 94-amino-acid polypeptide reads, in one-letter code: Small ribosomal subunit protein uS17 (94 aa).

The interval 1–22 (MSEQTSAASTTDRGDRKTRRGY) is disordered.

It belongs to the universal ribosomal protein uS17 family. In terms of assembly, part of the 30S ribosomal subunit.

In terms of biological role, one of the primary rRNA binding proteins, it binds specifically to the 5'-end of 16S ribosomal RNA. In Kineococcus radiotolerans (strain ATCC BAA-149 / DSM 14245 / SRS30216), this protein is Small ribosomal subunit protein uS17.